Consider the following 640-residue polypeptide: G protein-coupled receptor kinase 1 (640 aa).

An N-terminal region spans residues 1-201; sequence MEIENIVANT…LEKRPVDKHT (201 aa). Residues 52 to 187 form the RGS domain; the sequence is YAFVVEKQPI…IQTMYFHRFL (136 aa). A Protein kinase domain is found at 202–469; it reads FRLYRVLGKG…AEEIRAHPFF (268 aa). ATP-binding positions include 208 to 216 and K231; that span reads LGKGGFGEV. D327 acts as the Proton acceptor in catalysis. Positions 479–544 constitute an AGC-kinase C-terminal domain; the sequence is EPVPWKKMEA…GCVSIPWQSE (66 aa). The tract at residues 610 to 640 is disordered; the sequence is GVDQQQPSTSAKPAAVRSSRAASASGRTSMI. The span at 619–640 shows a compositional bias: low complexity; the sequence is SAKPAAVRSSRAASASGRTSMI.

The protein belongs to the protein kinase superfamily. AGC Ser/Thr protein kinase family. GPRK subfamily.

The catalysed reaction is [G-protein-coupled receptor] + ATP = [G-protein-coupled receptor]-phosphate + ADP + H(+). Its function is as follows. Specifically phosphorylates the activated forms of G protein-coupled receptors. The sequence is that of G protein-coupled receptor kinase 1 (grk-1) from Caenorhabditis briggsae.